The chain runs to 549 residues: Cation/acetate symporter ActP (549 aa).

13 helical membrane-spanning segments follow: residues 33-53 (WQAI…TYWA), 77-97 (LAIA…ALVF), 103-123 (GLIY…LIAE), 148-168 (ILSA…QMVG), 183-203 (IAVV…GMLA), 206-226 (WVQI…AFMV), 262-282 (ISAL…PHIL), 303-323 (GFMG…IMLV), 355-375 (LFLG…VAGL), 404-424 (VSKI…VLFE), 428-448 (IAFM…PIIL), 464-484 (GGWL…TIWV), and 493-513 (IFPY…GIWF).

Belongs to the sodium:solute symporter (SSF) (TC 2.A.21) family.

It is found in the cell inner membrane. Its function is as follows. Transports acetate. The protein is Cation/acetate symporter ActP of Salmonella agona (strain SL483).